A 163-amino-acid polypeptide reads, in one-letter code: Sorting nexin-3 (163 aa).

The PX domain occupies 39–162; sequence VEVRDPRTHF…VRFLQDEVFN (124 aa). 5 residues coordinate a 1,2-diacyl-sn-glycero-3-phospho-(1D-myo-inositol-3-phosphate): Arg82, Ser84, Lys113, Arg119, and Arg128.

This sequence belongs to the sorting nexin family.

Its subcellular location is the cytoplasm. The protein resides in the golgi apparatus membrane. It localises to the prevacuolar compartment membrane. In terms of biological role, required for retention of late Golgi membrane proteins. Component of the retrieval machinery that functions by direct interaction with the cytosolic tails of certain TGN membrane proteins during the sorting/budding process at the prevacuolar compartment. Binds phosphatidylinositol 3-phosphate (PtdIns(P3)). The protein is Sorting nexin-3 (SNX3) of Eremothecium gossypii (strain ATCC 10895 / CBS 109.51 / FGSC 9923 / NRRL Y-1056) (Yeast).